A 212-amino-acid polypeptide reads, in one-letter code: Proteasome subunit beta 2 (212 aa).

A propeptide spans 1–13 (MSVDEKVARALKG) (removed in mature form; by autocatalysis). Thr-14 (nucleophile) is an active-site residue.

Belongs to the peptidase T1B family. In terms of assembly, the 20S proteasome core is composed of 14 alpha and 14 beta subunits that assemble into four stacked heptameric rings, resulting in a barrel-shaped structure. The two inner rings, each composed of seven catalytic beta subunits, are sandwiched by two outer rings, each composed of seven alpha subunits. The catalytic chamber with the active sites is on the inside of the barrel. Has a gated structure, the ends of the cylinder being occluded by the N-termini of the alpha-subunits. Is capped at one or both ends by the proteasome regulatory ATPase, PAN.

The protein localises to the cytoplasm. The catalysed reaction is Cleavage of peptide bonds with very broad specificity.. Its activity is regulated as follows. The formation of the proteasomal ATPase PAN-20S proteasome complex, via the docking of the C-termini of PAN into the intersubunit pockets in the alpha-rings, triggers opening of the gate for substrate entry. Interconversion between the open-gate and close-gate conformations leads to a dynamic regulation of the 20S proteasome proteolysis activity. Its function is as follows. Component of the proteasome core, a large protease complex with broad specificity involved in protein degradation. This Ignicoccus hospitalis (strain KIN4/I / DSM 18386 / JCM 14125) protein is Proteasome subunit beta 2.